The chain runs to 53 residues: Photosystem II reaction center protein K (53 aa).

Positions 1–16 are excised as a propeptide; it reads MLKFYLENVFHLIFFA. A helical membrane pass occupies residues 28–48; sequence IVNVMPIIPLFFFLLAFVWQA.

Belongs to the PsbK family. In terms of assembly, PSII is composed of 1 copy each of membrane proteins PsbA, PsbB, PsbC, PsbD, PsbE, PsbF, PsbH, PsbI, PsbJ, PsbK, PsbL, PsbM, PsbT, PsbX, PsbY, PsbZ, Psb30/Ycf12, at least 3 peripheral proteins of the oxygen-evolving complex and a large number of cofactors. It forms dimeric complexes.

The protein localises to the plastid. The protein resides in the chloroplast thylakoid membrane. Its function is as follows. One of the components of the core complex of photosystem II (PSII). PSII is a light-driven water:plastoquinone oxidoreductase that uses light energy to abstract electrons from H(2)O, generating O(2) and a proton gradient subsequently used for ATP formation. It consists of a core antenna complex that captures photons, and an electron transfer chain that converts photonic excitation into a charge separation. This Huperzia lucidula (Shining clubmoss) protein is Photosystem II reaction center protein K.